Here is a 210-residue protein sequence, read N- to C-terminus: Prolactin (210 aa).

Residues 1–23 (MTQGSRLYFAVAVLMCGFVSING) form the signal peptide. Cystine bridges form between Cys69/Cys183 and Cys200/Cys210.

It belongs to the somatotropin/prolactin family. Pituitary gland.

The protein resides in the secreted. The sequence is that of Prolactin (prl1) from Carassius auratus (Goldfish).